Reading from the N-terminus, the 661-residue chain is MASAGKPALDDSRRGTGSPKIKARENAKDTLCRNITIYGRCRYEDKGCAFNHDPHKVNSSYQSDSKKRFNVDSPSFTPSLLSSNGSSPTSTPATTKKMTTISPKAANAAPFQPRSVVSRSNASTPGLRQDTVTPDWTVAEVQEFVPQGFDNSHLATLQGNGNGPITSTSPFDPFVTTSTPLSAGGAVGPVQPNPYSHDTAAALGGAAFFPGAAGFQQPVQYHLYAPIGPHSQNTLGYQRNVHDLFLPNDFREELQKKAAATLQTLPNTQLPAQIDYFHSLVPLDLNHQKNATIFGFPSWVYKAQSSKDGNFYALRRLEGFRLTNEKAIRSVQAWKRVCNGSVVTVHDAFTSRSFQDSSLIFVTDYHPLSKTLAEQHLGAGQQRFQGRQNVHIPEQILWGYMTQIANALKAIHSNGLAARVIDASKILLTGKNRIRLNACAIMDVVQFDSQRTVTDLQRQDLVNFGQLIVTLGANSPTVMHNPTKAMEHFTRAYSPQLKNSVFWLLNGMQKDQDRNIDIFITGISSQLMSTFDSALHLDDQLTSDLSRELENGRLVRLMTKLNFVNERPEYEHDRQWSENGERYFLKIFRDYVFHQVDVQGDPVVDLGHVISCLNKLDAGTEEKITLISRDEQSCFIVSYKELKKALESSFQALMKPARRMH.

2 disordered regions span residues 1-26 (MASA…AREN) and 53-130 (DPHK…LRQD). The C3H1-type zinc-finger motif lies at 26–55 (NAKDTLCRNITIYGRCRYEDKGCAFNHDPH). A compositionally biased stretch (low complexity) spans 75–102 (SFTPSLLSSNGSSPTSTPATTKKMTTIS). Residues 115 to 130 (SVVSRSNASTPGLRQD) show a composition bias toward polar residues. The segment at 263–524 (QTLPNTQLPA…NIDIFITGIS (262 aa)) is pseudokinase domain. Residues Arg315, 364–371 (DYHPLSKT), and 424–425 (SK) contribute to the ATP site. Residues 525–563 (SQLMSTFDSALHLDDQLTSDLSRELENGRLVRLMTKLNF) are a coiled coil. The interval 564 to 661 (VNERPEYEHD…ALMKPARRMH (98 aa)) is knob domain.

It belongs to the protein kinase superfamily. PAN3 family. In terms of assembly, homodimer. Forms a heterotrimer with a catalytic subunit pan2 to form the poly(A)-nuclease (PAN) deadenylation complex. Interacts (via PAM-2 motif) with poly(A)-binding protein pab1 (via PABC domain), conferring substrate specificity of the enzyme complex.

Its subcellular location is the cytoplasm. Its function is as follows. Regulatory subunit of the poly(A)-nuclease (PAN) deadenylation complex, one of two cytoplasmic mRNA deadenylases involved in mRNA turnover. PAN specifically shortens poly(A) tails of RNA and the activity is stimulated by poly(A)-binding protein pab1. PAN deadenylation is followed by rapid degradation of the shortened mRNA tails by the CCR4-NOT complex. Deadenylated mRNAs are then degraded by two alternative mechanisms, namely exosome-mediated 3'-5' exonucleolytic degradation, or deadenylation-dependent mRNA decaping and subsequent 5'-3' exonucleolytic degradation by xrn1. May also be involved in post-transcriptional maturation of mRNA poly(A) tails. pan3 acts as a positive regulator for PAN activity, recruiting the catalytic subunit pan2 to mRNA via its interaction with RNA and with pab1. In Neosartorya fischeri (strain ATCC 1020 / DSM 3700 / CBS 544.65 / FGSC A1164 / JCM 1740 / NRRL 181 / WB 181) (Aspergillus fischerianus), this protein is PAN2-PAN3 deadenylation complex subunit PAN3.